Here is a 357-residue protein sequence, read N- to C-terminus: sn-glycerol-3-phosphate import ATP-binding protein UgpC (357 aa).

In terms of domain architecture, ABC transporter spans 4–235 (LKLQAVTKSY…PASLFVASFI (232 aa)). 37–44 (GPSGCGKS) is an ATP binding site.

The protein belongs to the ABC transporter superfamily. sn-glycerol-3-phosphate importer (TC 3.A.1.1.3) family. As to quaternary structure, the complex is composed of two ATP-binding proteins (UgpC), two transmembrane proteins (UgpA and UgpE) and a solute-binding protein (UgpB).

The protein localises to the cell inner membrane. It catalyses the reaction sn-glycerol 3-phosphate(out) + ATP + H2O = sn-glycerol 3-phosphate(in) + ADP + phosphate + H(+). In terms of biological role, part of the ABC transporter complex UgpBAEC involved in sn-glycerol-3-phosphate (G3P) import. Responsible for energy coupling to the transport system. In Pectobacterium atrosepticum (strain SCRI 1043 / ATCC BAA-672) (Erwinia carotovora subsp. atroseptica), this protein is sn-glycerol-3-phosphate import ATP-binding protein UgpC.